Reading from the N-terminus, the 413-residue chain is Serine hydroxymethyltransferase (413 aa).

(6S)-5,6,7,8-tetrahydrofolate-binding positions include Leu119 and 123-125; that span reads GHL. N6-(pyridoxal phosphate)lysine is present on Lys228. Residue 351–353 coordinates (6S)-5,6,7,8-tetrahydrofolate; sequence SPF.

This sequence belongs to the SHMT family. In terms of assembly, homodimer. Pyridoxal 5'-phosphate is required as a cofactor.

It is found in the cytoplasm. The enzyme catalyses (6R)-5,10-methylene-5,6,7,8-tetrahydrofolate + glycine + H2O = (6S)-5,6,7,8-tetrahydrofolate + L-serine. Its pathway is one-carbon metabolism; tetrahydrofolate interconversion. It participates in amino-acid biosynthesis; glycine biosynthesis; glycine from L-serine: step 1/1. Its function is as follows. Catalyzes the reversible interconversion of serine and glycine with tetrahydrofolate (THF) serving as the one-carbon carrier. This reaction serves as the major source of one-carbon groups required for the biosynthesis of purines, thymidylate, methionine, and other important biomolecules. Also exhibits THF-independent aldolase activity toward beta-hydroxyamino acids, producing glycine and aldehydes, via a retro-aldol mechanism. The protein is Serine hydroxymethyltransferase of Anoxybacillus flavithermus (strain DSM 21510 / WK1).